The chain runs to 233 residues: MLKPSVTSAPTADMATLTVVQPLTLDRDVARAIELLEKLQESGEVPVHKLQSLKKVLQSEFCTAIREVYQYMHETITVNGCPEFRARATAKATVAAFAASEGHSHPRVVELPKTDEGLGFNVMGGKEQNSPIYISRIIPGGVAERHGGLKRGDQLLSVNGVSVEGEHHEKAVELLKAAKDSVKLVVRYTPKVLEEMEARFEKLRTARRRQQQQLLIQQQQQQQQQQTQQNHMS.

The region spanning 25–80 is the L27 domain; it reads LDRDVARAIELLEKLQESGEVPVHKLQSLKKVLQSEFCTAIREVYQYMHETITVNG. The PDZ domain occupies 108–190; it reads VVELPKTDEG…SVKLVVRYTP (83 aa).

This sequence belongs to the lin-7 family. As to quaternary structure, forms a complex with CASK and CASKIN1. Component of the brain-specific heterotrimeric complex (LIN-10-LIN-2-LIN-7 complex) composed of at least APBA1, CASK, and LIN7, which associates with the motor protein KIF17 to transport vesicles along microtubules. Can also interact with other modular proteins containing protein-protein interaction domains like PALS1, PALS2, MPP7, DLG1, DLG2 and DLG3 through its L27 domain. Interacts with DLG4, GRIN2B and MARCHF11 as well as CDH1 and CTNNB1, the channels KCNJ12/Kir2.2, KCNJ4/Kir2.3 and probably KCNJ2/Kir2.1 and SLC6A12/BGT-1 via its PDZ domain. The association of LIN7A with cadherin and beta-catenin is calcium-dependent, occurs at synaptic junctions and requires the actin cytoskeleton. Interacts with EGFR, ERBB2, ERBB3 and ERBB4 with both PDZ and KID domains. Associates with KIF17 via APBA1. Interacts with HTR4. Forms a tripartite complex composed of DLG1, MPP7 and LIN7 (LIN7A or LIN7C).

It localises to the cell membrane. Its subcellular location is the basolateral cell membrane. The protein localises to the cell junction. It is found in the postsynaptic density membrane. The protein resides in the tight junction. In terms of biological role, plays a role in establishing and maintaining the asymmetric distribution of channels and receptors at the plasma membrane of polarized cells. Forms membrane-associated multiprotein complexes that may regulate delivery and recycling of proteins to the correct membrane domains. The tripartite complex composed of LIN7 (LIN7A, LIN7B or LIN7C), CASK and APBA1 associates with the motor protein KIF17 to transport vesicles containing N-methyl-D-aspartate (NMDA) receptor subunit NR2B along microtubules. This complex may have the potential to couple synaptic vesicle exocytosis to cell adhesion in brain. Ensures the proper localization of GRIN2B (subunit 2B of the NMDA receptor) to neuronal postsynaptic density and may function in localizing synaptic vesicles at synapses where it is recruited by beta-catenin and cadherin. Required to localize Kir2 channels, GABA transporter (SLC6A12) and EGFR/ERBB1, ERBB2, ERBB3 and ERBB4 to the basolateral membrane of epithelial cells. The protein is Protein lin-7 homolog A (LIN7A) of Bos taurus (Bovine).